The following is a 250-amino-acid chain: MNRITVDQVRDEAKNVRTLFFRWDHDVKPGQFVMVWLPGLGEIPMSLSYVGSPKGITVKAYGKVSQAMIDMEPGHEFYIRGPYGNGFQIESGRKLIIGGGSGIASLLPIADSDTDALISAKTKEELIFTDRFPESRLFIATDDGSEGFHGFPHEFLDRLDISVYRKIYVCGPEPMLYRVMQKLASMNARAEFSLERTMKCGIGICDSCSVGGLQVCRQGPVFDIEQLRNNPEFGISRTTYSGKRVYLNMK.

Residues 1–89 (MNRITVDQVR…RGPYGNGFQI (89 aa)) enclose the FAD-binding FR-type domain. Residues Cys200, Cys205, Cys208, and Cys216 each coordinate [2Fe-2S] cluster.

It belongs to the PyrK family. As to quaternary structure, heterotetramer of 2 PyrK and 2 PyrD type B subunits. It depends on [2Fe-2S] cluster as a cofactor. FAD is required as a cofactor.

It participates in pyrimidine metabolism; UMP biosynthesis via de novo pathway; orotate from (S)-dihydroorotate (NAD(+) route): step 1/1. Its function is as follows. Responsible for channeling the electrons from the oxidation of dihydroorotate from the FMN redox center in the PyrD type B subunit to the ultimate electron acceptor NAD(+). The protein is Probable dihydroorotate dehydrogenase B (NAD(+)), electron transfer subunit of Thermoplasma acidophilum (strain ATCC 25905 / DSM 1728 / JCM 9062 / NBRC 15155 / AMRC-C165).